A 379-amino-acid polypeptide reads, in one-letter code: Tryptophan 2,3-dioxygenase (379 aa).

Substrate contacts are provided by residues 57–61 and R128; that span reads FIITH. Residue H312 coordinates heme. T327 lines the substrate pocket.

Belongs to the tryptophan 2,3-dioxygenase family. In terms of assembly, homotetramer. Dimer of dimers. The cofactor is heme.

It catalyses the reaction L-tryptophan + O2 = N-formyl-L-kynurenine. The protein operates within amino-acid degradation; L-tryptophan degradation via kynurenine pathway; L-kynurenine from L-tryptophan: step 1/2. It participates in pigment biosynthesis; ommochrome biosynthesis. Its function is as follows. Heme-dependent dioxygenase that catalyzes the oxidative cleavage of the L-tryptophan (L-Trp) pyrrole ring and converts L-tryptophan to N-formyl-L-kynurenine. Catalyzes the oxidative cleavage of the indole moiety. This chain is Tryptophan 2,3-dioxygenase, found in Drosophila erecta (Fruit fly).